The following is a 356-amino-acid chain: MAGATLFDMNDKRSADKQKALDSALAQIERQFGKGSIMKLGADNPVAEIEATSTGSLGLDIALGIGGLPKGRIIEIFGPESSGKTTLTLHVVAEEQKKGGVCAFVDAEHALDPQYAKKLGVNLDELLISQPDTGEQALEIVDTLVASGAVSLVVVDSVAALTPKSEIEGDMGDMQMGSQARLMSQAMRKLTASIGRSNCMVIFINQIRMKIGVMFGSPETTTGGNALKFYASVRLDIRRAGSIKDRDEVTGNATRVKVVKNKVAPPFRQVEFDIMYGEGISKVGELIDLGIKAGVVEKSGSWYSYGDERIGQGRENAKQFLRDHPDMAHAIEDKIRASHGLDFGVADDGDEVMAED.

Gly-78–Thr-85 is an ATP binding site.

The protein belongs to the RecA family.

It localises to the cytoplasm. Functionally, can catalyze the hydrolysis of ATP in the presence of single-stranded DNA, the ATP-dependent uptake of single-stranded DNA by duplex DNA, and the ATP-dependent hybridization of homologous single-stranded DNAs. It interacts with LexA causing its activation and leading to its autocatalytic cleavage. This is Protein RecA from Paracoccus denitrificans.